Reading from the N-terminus, the 382-residue chain is MSRDLFTSESVSEGHPDKIADQISDAVLDAILKQDKKARVACETYVKTGMVMVGGEITTDAWVDIEEITRNTVRNIGYTSSEMGFDADSCAILNVIGKQSPDINQGVDRSDPREQGAGDQGLMFGYATNETDVFMPAPITYAHHLVKRQAKVRKNKTLPWLRPDAKSQVTFAYDHGKIVGIDAVVLSTQHSEDIKQEDLVEAVMEEIIKPVLPAEWLSERTKYFINPTGRFVIGGPVGDCGLTGRKIIVDTYGGSARHGGGAFSGKDPSKVDRSAAYAARYVAKNIVAAGLADRCEIQVSYAIGVAEPTSISVETFGTEKVKKDLIIQLIREHFDLRPYGLIEMLNLIQPIYQSTAAYGHFGRNEFPWEALDKVEALKAGAF.

H15 contacts ATP. A Mg(2+)-binding site is contributed by D17. A K(+)-binding site is contributed by E43. L-methionine is bound by residues E56 and Q99. Residues 99 to 109 (QSPDINQGVDR) form a flexible loop region. Residues 164-166 (DAK), 230-231 (RF), D239, 245-246 (RK), A262, and K266 contribute to the ATP site. Residue D239 coordinates L-methionine. K270 is an L-methionine binding site.

Belongs to the AdoMet synthase family. Homotetramer; dimer of dimers. Requires Mg(2+) as cofactor. It depends on K(+) as a cofactor.

It is found in the cytoplasm. The enzyme catalyses L-methionine + ATP + H2O = S-adenosyl-L-methionine + phosphate + diphosphate. Its pathway is amino-acid biosynthesis; S-adenosyl-L-methionine biosynthesis; S-adenosyl-L-methionine from L-methionine: step 1/1. Functionally, catalyzes the formation of S-adenosylmethionine (AdoMet) from methionine and ATP. The overall synthetic reaction is composed of two sequential steps, AdoMet formation and the subsequent tripolyphosphate hydrolysis which occurs prior to release of AdoMet from the enzyme. The chain is S-adenosylmethionine synthase from Psychromonas ingrahamii (strain DSM 17664 / CCUG 51855 / 37).